We begin with the raw amino-acid sequence, 943 residues long: Receptor-like protein 35 (943 aa).

Positions 1 to 31 are cleaved as a signal peptide; that stretch reads MTGSWNPTSIIIPVTLSFLLSFIHNFADVVA. The Extracellular portion of the chain corresponds to 32–897; the sequence is APTRHLCLPE…EEEDEEEISW (866 aa). 8 N-linked (GlcNAc...) asparagine glycosylation sites follow: Asn67, Asn82, Asn118, Asn147, Asn171, Asn195, Asn219, and Asn222. LRR repeat units follow at residues 124–148, 150–171, 172–196, 198–220, 222–244, 245–267, 268–292, 293–317, 319–340, 341–364, and 366–389; these read LQNL…IGNL, HLTS…SIEN, LSRL…IGNL, HLTS…IGNL, NLTF…IGNL, ARLT…SFGN, LNQL…LLNL, TRLS…SLLS, LMDF…LFNI, PPLI…NISS, and SNLQ…LSRF. 2 N-linked (GlcNAc...) asparagine glycosylation sites follow: Asn291 and Asn312. N-linked (GlcNAc...) asparagine glycosylation is found at Asn354 and Asn361. Residues 390–414 form an LRR 12; degenerate repeat; the sequence is VNLTLFDLSHLNTQCRPVDFSIFSH. Asn391 carries N-linked (GlcNAc...) asparagine glycosylation. LRR repeat units lie at residues 415–439, 440–463, 467–490, 491–514, 515–537, 544–568, 569–592, 593–617, 619–639, 640–665, 667–685, 686–709, 753–777, 778–801, 802–825, and 827–850; these read LKSL…ILPY, FKTL…SVSS, SQSI…LRTQ, HELG…LWTL, PNLF…SKKH, KPSM…ICGL, RSLN…MEKL, KSTL…IFES, RSLD…LIRF, SNLE…SLSK, QVLV…EATF, PELR…YFVK, LTIY…IGLL, KELL…MGNL, TALE…LGDL, and FLAY…QFRR. An N-linked (GlcNAc...) asparagine glycan is attached at Asn457. Asn521, Asn524, Asn556, Asn582, and Asn605 each carry an N-linked (GlcNAc...) asparagine glycan. N-linked (GlcNAc...) asparagine glycosylation is present at Asn653. An N-linked (GlcNAc...) asparagine glycan is attached at Asn699. Asn784 and Asn800 each carry an N-linked (GlcNAc...) asparagine glycan. N-linked (GlcNAc...) asparagine glycans are attached at residues Asn832, Asn852, and Asn882. A helical membrane pass occupies residues 898–918; it reads IAAAIGFIPGIVFGLTIGYIL. Over 919–943 the chain is Cytoplasmic; the sequence is VSYKPEWFMNPFGRNNRRRRNTTTH.

Belongs to the RLP family.

Its subcellular location is the cell membrane. The protein is Receptor-like protein 35 of Arabidopsis thaliana (Mouse-ear cress).